Here is a 731-residue protein sequence, read N- to C-terminus: 1,4-alpha-glucan branching enzyme GlgB (731 aa).

The active-site Nucleophile is the Asp411. Catalysis depends on Glu464, which acts as the Proton donor.

Belongs to the glycosyl hydrolase 13 family. GlgB subfamily. In terms of assembly, monomer.

The catalysed reaction is Transfers a segment of a (1-&gt;4)-alpha-D-glucan chain to a primary hydroxy group in a similar glucan chain.. Its pathway is glycan biosynthesis; glycogen biosynthesis. Catalyzes the formation of the alpha-1,6-glucosidic linkages in glycogen by scission of a 1,4-alpha-linked oligosaccharide from growing alpha-1,4-glucan chains and the subsequent attachment of the oligosaccharide to the alpha-1,6 position. The polypeptide is 1,4-alpha-glucan branching enzyme GlgB (Mycolicibacterium paratuberculosis (strain ATCC BAA-968 / K-10) (Mycobacterium paratuberculosis)).